The primary structure comprises 220 residues: Peptide methionine sulfoxide reductase MsrA (220 aa).

Cys54 is a catalytic residue.

The protein belongs to the MsrA Met sulfoxide reductase family.

The enzyme catalyses L-methionyl-[protein] + [thioredoxin]-disulfide + H2O = L-methionyl-(S)-S-oxide-[protein] + [thioredoxin]-dithiol. The catalysed reaction is [thioredoxin]-disulfide + L-methionine + H2O = L-methionine (S)-S-oxide + [thioredoxin]-dithiol. Has an important function as a repair enzyme for proteins that have been inactivated by oxidation. Catalyzes the reversible oxidation-reduction of methionine sulfoxide in proteins to methionine. This is Peptide methionine sulfoxide reductase MsrA from Salinispora tropica (strain ATCC BAA-916 / DSM 44818 / JCM 13857 / NBRC 105044 / CNB-440).